We begin with the raw amino-acid sequence, 92 residues long: Small ribosomal subunit protein uS17 (92 aa).

This sequence belongs to the universal ribosomal protein uS17 family. In terms of assembly, part of the 30S ribosomal subunit.

One of the primary rRNA binding proteins, it binds specifically to the 5'-end of 16S ribosomal RNA. This chain is Small ribosomal subunit protein uS17, found in Corynebacterium diphtheriae (strain ATCC 700971 / NCTC 13129 / Biotype gravis).